We begin with the raw amino-acid sequence, 337 residues long: Sideroflexin-4 (337 aa).

S2 is subject to N-acetylserine. Transmembrane regions (helical) follow at residues A111–I131, S133–G153, and S165–V185. K197 is subject to N6-acetyllysine. A run of 2 helical transmembrane segments spans residues A251–F271 and V293–I313.

Belongs to the sideroflexin family.

Its subcellular location is the mitochondrion inner membrane. Mitochondrial amino-acid transporter. Does not act as a serine transporter: not able to mediate transport of serine into mitochondria. The sequence is that of Sideroflexin-4 from Homo sapiens (Human).